The sequence spans 353 residues: BLOC-1-related complex subunit 6 (353 aa).

The segment at 23–194 (AIFGDGPGQT…SGAGGGRRAT (172 aa)) is disordered. Over residues 102–126 (FDLHGSSRRKDPEPPEAKPESERVC) the composition is skewed to basic and acidic residues. Residues Ser130 and Ser166 each carry the phosphoserine modification. Over residues 172-191 (GACGGPASSGGAESGAGGGR) the composition is skewed to gly residues. Phosphothreonine is present on Thr194. Ser197 is subject to Phosphoserine. Residues 225 to 253 (LSGAPQPPPPAPTRPCSAPTPTPAIPPID) are disordered. Over residues 229 to 253 (PQPPPPAPTRPCSAPTPTPAIPPID) the composition is skewed to pro residues.

This sequence belongs to the BORCS6 family. In terms of assembly, component of the BLOC-one-related complex (BORC) which is composed of BLOC1S1, BLOC1S2, BORCS5, BORCS6, BORCS7, BORCS8, KXD1 and SNAPIN.

It is found in the lysosome membrane. In terms of biological role, as part of the BORC complex may play a role in lysosomes movement and localization at the cell periphery. Associated with the cytosolic face of lysosomes, the BORC complex may recruit ARL8B and couple lysosomes to microtubule plus-end-directed kinesin motor. The sequence is that of BLOC-1-related complex subunit 6 from Bos taurus (Bovine).